The following is a 310-amino-acid chain: MILTVTLNPSVDISYPLETLKIDTVNRVKDVSKTAGGKGLNVTRVLYESGDKVTATGFLGGKIGEFIESELEQSPVSPAFYKISGNTRNCIAILHEGNQTEILEQGPTISHEEAEGFLDHYSNLIKQSEVVTISGSLPSGLPNDYYEKLIQLASDEGVAVVLDCSGAPLETVLKSSAKPTAIKPNNEELSQLLGKEVTKDIEELKDVLKESLFSGIEWIVVSLGRNGAFAKHGDVFYKVDIPDIPVVNPVGSGDSTVAGIASALNSKKSDADLLKHAMTLGMLNAQETMTGHVNMTNYETLNSQIGVKEV.

The protein belongs to the carbohydrate kinase PfkB family. LacC subfamily.

The catalysed reaction is D-tagatofuranose 6-phosphate + ATP = D-tagatofuranose 1,6-bisphosphate + ADP + H(+). It participates in carbohydrate metabolism; D-tagatose 6-phosphate degradation; D-glyceraldehyde 3-phosphate and glycerone phosphate from D-tagatose 6-phosphate: step 1/2. The sequence is that of Tagatose-6-phosphate kinase from Lactococcus lactis subsp. lactis (Streptococcus lactis).